The following is a 54-amino-acid chain: UPF0391 membrane protein msr3702 (54 aa).

2 helical membrane passes run 4–24 and 30–50; these read WALVFLVVAIIAGALGFGGIA and IAQILFFIFLAFLVISLLAGL.

Belongs to the UPF0391 family.

The protein localises to the cell membrane. The protein is UPF0391 membrane protein msr3702 of Mesorhizobium japonicum (strain LMG 29417 / CECT 9101 / MAFF 303099) (Mesorhizobium loti (strain MAFF 303099)).